Consider the following 235-residue polypeptide: MWGYLSLLPMCLAFWAIAGIWTVFSLAVVNKAVNLTDGFPYISVCGNVPPQSCIFSQVLNIGAASAAWICILRYYQLRDWGVRKWHNQVILWTGLLCALGTSIVGNFQEKNQRATHLTGAFLAFFVGIVYFWLQLFLSWRMKNLPQPGAPWIGPLRLVLCSACFILEVAMVVLHSWSMRSVSAICEWVAAMLLFILFGLLAVDFSRLDSCTLCLQPGSGSLRPPPDSPTSLHVQL.

Topologically, residues methionine 1–leucine 8 are cytoplasmic. The chain crosses the membrane as a helical span at residues proline 9–valine 29. The Extracellular portion of the chain corresponds to asparagine 30–glutamine 51. Asparagine 34 is a glycosylation site (N-linked (GlcNAc...) asparagine). Residues serine 52–leucine 72 form a helical membrane-spanning segment. Residues arginine 73 to glutamine 88 are Cytoplasmic-facing. Residues valine 89–glutamate 109 form a helical membrane-spanning segment. Over lysine 110–histidine 116 the chain is Extracellular. The chain crosses the membrane as a helical span at residues leucine 117–leucine 137. The Cytoplasmic segment spans residues serine 138–arginine 156. The helical transmembrane segment at leucine 157 to serine 177 threads the bilayer. Topologically, residues methionine 178–serine 180 are extracellular. The chain crosses the membrane as a helical span at residues valine 181–alanine 201. Topologically, residues valine 202–leucine 235 are cytoplasmic.

It belongs to the DRAM/TMEM150 family.

It localises to the cell membrane. The protein resides in the endosome membrane. The protein localises to the cytoplasmic vesicle. It is found in the autophagosome membrane. In terms of biological role, modulator of macroautophagy that causes accumulation of autophagosomes under basal conditions and enhances autophagic flux. Represses cell death and promotes long-term clonogenic survival of cells grown in the absence of glucose in a macroautophagy-independent manner. May have some role in extracellular matrix engulfment or growth factor receptor recycling, both of which can modulate cell survival. The sequence is that of Modulator of macroautophagy TMEM150B from Bos taurus (Bovine).